The chain runs to 293 residues: 4-diphosphocytidyl-2-C-methyl-D-erythritol kinase (293 aa).

Lysine 10 is an active-site residue. 94–104 (PVSAGLAGGSS) serves as a coordination point for ATP. Residue aspartate 136 is part of the active site.

It belongs to the GHMP kinase family. IspE subfamily.

The catalysed reaction is 4-CDP-2-C-methyl-D-erythritol + ATP = 4-CDP-2-C-methyl-D-erythritol 2-phosphate + ADP + H(+). Its pathway is isoprenoid biosynthesis; isopentenyl diphosphate biosynthesis via DXP pathway; isopentenyl diphosphate from 1-deoxy-D-xylulose 5-phosphate: step 3/6. Functionally, catalyzes the phosphorylation of the position 2 hydroxy group of 4-diphosphocytidyl-2C-methyl-D-erythritol. This Listeria monocytogenes serovar 1/2a (strain ATCC BAA-679 / EGD-e) protein is 4-diphosphocytidyl-2-C-methyl-D-erythritol kinase.